The following is a 155-amino-acid chain: UPF0178 protein RPC_3085 (155 aa).

This sequence belongs to the UPF0178 family.

The sequence is that of UPF0178 protein RPC_3085 from Rhodopseudomonas palustris (strain BisB18).